A 325-amino-acid polypeptide reads, in one-letter code: Gamma-hemolysin component B (325 aa).

Residues methionine 1–asparagine 25 form the signal peptide.

The protein belongs to the aerolysin family. As to quaternary structure, toxicity requires sequential binding and synergistic association of a class S and a class F component which form heterooligomeric complexes. HlgB (class F) associates with either hlgA thus forming an AB toxin or with hlgC thus forming a CB toxin. Interacts with host AMFR.

In terms of biological role, toxin that seems to act by forming pores in the membrane of the cell. Has a hemolytic and a leucotoxic activity. Promotes host AMFR-mediated inflammation by mediating 'Lys-27'-linked ubiquitination of TAB3, TAK1-TAB3 complex formation and phosphorylation of TAK1/MAP3K7. In turn, activates host NF-kappa-B signaling pathway. The polypeptide is Gamma-hemolysin component B (hlgB) (Staphylococcus aureus (strain MRSA252)).